We begin with the raw amino-acid sequence, 171 residues long: Peptide deformylase (171 aa).

2 residues coordinate Fe cation: C91 and H133. Residue E134 is part of the active site. H137 is a binding site for Fe cation.

This sequence belongs to the polypeptide deformylase family. It depends on Fe(2+) as a cofactor.

It carries out the reaction N-terminal N-formyl-L-methionyl-[peptide] + H2O = N-terminal L-methionyl-[peptide] + formate. Functionally, removes the formyl group from the N-terminal Met of newly synthesized proteins. Requires at least a dipeptide for an efficient rate of reaction. N-terminal L-methionine is a prerequisite for activity but the enzyme has broad specificity at other positions. This chain is Peptide deformylase, found in Cronobacter sakazakii (strain ATCC BAA-894) (Enterobacter sakazakii).